Reading from the N-terminus, the 356-residue chain is UDP-N-acetylglucosamine--N-acetylmuramyl-(pentapeptide) pyrophosphoryl-undecaprenol N-acetylglucosamine transferase (356 aa).

Residues 12–14 (TGG), N124, R163, S188, I242, and Q287 contribute to the UDP-N-acetyl-alpha-D-glucosamine site.

Belongs to the glycosyltransferase 28 family. MurG subfamily.

It is found in the cell inner membrane. The catalysed reaction is di-trans,octa-cis-undecaprenyl diphospho-N-acetyl-alpha-D-muramoyl-L-alanyl-D-glutamyl-meso-2,6-diaminopimeloyl-D-alanyl-D-alanine + UDP-N-acetyl-alpha-D-glucosamine = di-trans,octa-cis-undecaprenyl diphospho-[N-acetyl-alpha-D-glucosaminyl-(1-&gt;4)]-N-acetyl-alpha-D-muramoyl-L-alanyl-D-glutamyl-meso-2,6-diaminopimeloyl-D-alanyl-D-alanine + UDP + H(+). It participates in cell wall biogenesis; peptidoglycan biosynthesis. Its function is as follows. Cell wall formation. Catalyzes the transfer of a GlcNAc subunit on undecaprenyl-pyrophosphoryl-MurNAc-pentapeptide (lipid intermediate I) to form undecaprenyl-pyrophosphoryl-MurNAc-(pentapeptide)GlcNAc (lipid intermediate II). This Pseudomonas syringae pv. syringae (strain B728a) protein is UDP-N-acetylglucosamine--N-acetylmuramyl-(pentapeptide) pyrophosphoryl-undecaprenol N-acetylglucosamine transferase.